The primary structure comprises 200 residues: Small ribosomal subunit protein uS4 (200 aa).

Positions 22–43 are disordered; sequence TGKELERRPYAPGQHGPTQRKK. Residues 92-170 enclose the S4 RNA-binding domain; it reads QRLDNIVYRL…VPEYVTFDAE (79 aa).

Belongs to the universal ribosomal protein uS4 family. As to quaternary structure, part of the 30S ribosomal subunit. Contacts protein S5. The interaction surface between S4 and S5 is involved in control of translational fidelity.

Its function is as follows. One of the primary rRNA binding proteins, it binds directly to 16S rRNA where it nucleates assembly of the body of the 30S subunit. In terms of biological role, with S5 and S12 plays an important role in translational accuracy. The sequence is that of Small ribosomal subunit protein uS4 from Listeria monocytogenes serotype 4a (strain HCC23).